The sequence spans 581 residues: Mitosis inhibitor protein kinase mik1 (581 aa).

Disordered stretches follow at residues 43–71 (GHEE…HTPM) and 148–178 (NLTN…PLSP). Residues 59–71 (KPSNTKRSPHTPM) are compositionally biased toward polar residues. Over residues 160–169 (PCKKGTKIKL) the composition is skewed to basic residues. Positions 289–561 (FQQVKPIHES…LLAMPEMIFI (273 aa)) constitute a Protein kinase domain. Residues 295–303 (IHESDFSFV) and Lys320 contribute to the ATP site. Asp417 acts as the Proton acceptor in catalysis. Residues Asn422 and Asp435 each contribute to the Mg(2+) site.

This sequence belongs to the protein kinase superfamily. Ser/Thr protein kinase family. WEE1 subfamily.

The enzyme catalyses L-seryl-[protein] + ATP = O-phospho-L-seryl-[protein] + ADP + H(+). It carries out the reaction L-threonyl-[protein] + ATP = O-phospho-L-threonyl-[protein] + ADP + H(+). Protein kinase that acts both on serines and on tyrosines. It acts as a negative regulator of entry into mitosis (G2 to M transition). Phosphorylates and inhibits cdc2. The sequence is that of Mitosis inhibitor protein kinase mik1 (mik1) from Schizosaccharomyces pombe (strain 972 / ATCC 24843) (Fission yeast).